A 201-amino-acid chain; its full sequence is Large ribosomal subunit protein uL18 (201 aa).

The protein belongs to the universal ribosomal protein uL18 family. Part of the 50S ribosomal subunit. Contacts the 5S and 23S rRNAs.

In terms of biological role, this is one of the proteins that bind and probably mediate the attachment of the 5S RNA into the large ribosomal subunit, where it forms part of the central protuberance. The protein is Large ribosomal subunit protein uL18 of Thermococcus kodakarensis (strain ATCC BAA-918 / JCM 12380 / KOD1) (Pyrococcus kodakaraensis (strain KOD1)).